A 141-amino-acid chain; its full sequence is Auxin-responsive protein SAUR62 (141 aa).

This sequence belongs to the ARG7 family. As to expression, expressed in stamen filaments and petals.

It is found in the cell membrane. In terms of biological role, may promote auxin-stimulated organ elongation, such as hypocotyls, stamen filaments and petals. The chain is Auxin-responsive protein SAUR62 from Arabidopsis thaliana (Mouse-ear cress).